A 333-amino-acid polypeptide reads, in one-letter code: Type II secretion system protein K (333 aa).

The propeptide at 1–7 (MRRGQNG) is leader sequence. A helical transmembrane segment spans residues 8 to 29 (VALITVLLVVAVVTIVCAGLII). The Periplasmic portion of the chain corresponds to 30–333 (RQQLAIRSSA…GGDDWKKDER (304 aa)). The segment at 313-333 (MGQGGLPIPSTGGDDWKKDER) is disordered.

This sequence belongs to the GSP K family. As to quaternary structure, type II secretion is composed of four main components: the outer membrane complex, the inner membrane complex, the cytoplasmic secretion ATPase and the periplasm-spanning pseudopilus. Interacts with the tip of the type II pseudopilus subunits XcpV, XcpU and XcpW. Interacts with core component XcpT. In terms of processing, cleaved by prepilin peptidase.

It is found in the cell inner membrane. Its function is as follows. Component of the type II secretion system required for the energy-dependent secretion of extracellular factors such as proteases and toxins from the periplasm. Plays a role in pseudopilus assembly and seems to control its length. Interacts with the pseudopilus tip complex that is critical for the recognition and binding of secretion substrates. Type II pseudopilus confers increased bacterial adhesive capabilities. This Pseudomonas aeruginosa (strain ATCC 15692 / DSM 22644 / CIP 104116 / JCM 14847 / LMG 12228 / 1C / PRS 101 / PAO1) protein is Type II secretion system protein K (xcpX).